The sequence spans 94 residues: Aspartyl/glutamyl-tRNA(Asn/Gln) amidotransferase subunit C (94 aa).

The protein belongs to the GatC family. Heterotrimer of A, B and C subunits.

The catalysed reaction is L-glutamyl-tRNA(Gln) + L-glutamine + ATP + H2O = L-glutaminyl-tRNA(Gln) + L-glutamate + ADP + phosphate + H(+). It carries out the reaction L-aspartyl-tRNA(Asn) + L-glutamine + ATP + H2O = L-asparaginyl-tRNA(Asn) + L-glutamate + ADP + phosphate + 2 H(+). Functionally, allows the formation of correctly charged Asn-tRNA(Asn) or Gln-tRNA(Gln) through the transamidation of misacylated Asp-tRNA(Asn) or Glu-tRNA(Gln) in organisms which lack either or both of asparaginyl-tRNA or glutaminyl-tRNA synthetases. The reaction takes place in the presence of glutamine and ATP through an activated phospho-Asp-tRNA(Asn) or phospho-Glu-tRNA(Gln). This is Aspartyl/glutamyl-tRNA(Asn/Gln) amidotransferase subunit C from Syntrophomonas wolfei subsp. wolfei (strain DSM 2245B / Goettingen).